Consider the following 210-residue polypeptide: Large ribosomal subunit protein uL3 (210 aa).

Residues 139–165 (AEKVHRSPGSIGHATFPGKVFKGKKMP) are disordered.

Belongs to the universal ribosomal protein uL3 family. As to quaternary structure, part of the 50S ribosomal subunit. Forms a cluster with proteins L14 and L19.

Functionally, one of the primary rRNA binding proteins, it binds directly near the 3'-end of the 23S rRNA, where it nucleates assembly of the 50S subunit. This chain is Large ribosomal subunit protein uL3, found in Maridesulfovibrio salexigens (strain ATCC 14822 / DSM 2638 / NCIMB 8403 / VKM B-1763) (Desulfovibrio salexigens).